A 169-amino-acid polypeptide reads, in one-letter code: MKNKVVFIGMPGCGKSTIGRLVSEELKINFIDMDNYIENMTSKTIPELFEHGENYFRDFESLACRELAKEGKAIISSGGGVVKRKENIDILKEESFIIFIDRPLEELLGDVDISKRPLLKEGREKIIKLYEERYELYRLCADKIIRNDREIGNIVNEIKEVILDNLEMN.

ATP is bound at residue 12–17 (GCGKST). Residue S16 coordinates Mg(2+). D34, R57, and G79 together coordinate substrate. Residue R116 participates in ATP binding. R133 contacts substrate.

This sequence belongs to the shikimate kinase family. In terms of assembly, monomer. The cofactor is Mg(2+).

It is found in the cytoplasm. It catalyses the reaction shikimate + ATP = 3-phosphoshikimate + ADP + H(+). It functions in the pathway metabolic intermediate biosynthesis; chorismate biosynthesis; chorismate from D-erythrose 4-phosphate and phosphoenolpyruvate: step 5/7. Its function is as follows. Catalyzes the specific phosphorylation of the 3-hydroxyl group of shikimic acid using ATP as a cosubstrate. The chain is Shikimate kinase from Clostridium beijerinckii (strain ATCC 51743 / NCIMB 8052) (Clostridium acetobutylicum).